The following is a 428-amino-acid chain: Serine--tRNA ligase (428 aa).

Position 231–233 (231–233 (TSE)) interacts with L-serine. ATP contacts are provided by residues 262-264 (RRE) and V278. Residue E285 coordinates L-serine. 349-352 (ELTS) contacts ATP. Residue T384 participates in L-serine binding.

Belongs to the class-II aminoacyl-tRNA synthetase family. Type-1 seryl-tRNA synthetase subfamily. Homodimer. The tRNA molecule binds across the dimer.

It is found in the cytoplasm. It catalyses the reaction tRNA(Ser) + L-serine + ATP = L-seryl-tRNA(Ser) + AMP + diphosphate + H(+). It carries out the reaction tRNA(Sec) + L-serine + ATP = L-seryl-tRNA(Sec) + AMP + diphosphate + H(+). It functions in the pathway aminoacyl-tRNA biosynthesis; selenocysteinyl-tRNA(Sec) biosynthesis; L-seryl-tRNA(Sec) from L-serine and tRNA(Sec): step 1/1. Its function is as follows. Catalyzes the attachment of serine to tRNA(Ser). Is also able to aminoacylate tRNA(Sec) with serine, to form the misacylated tRNA L-seryl-tRNA(Sec), which will be further converted into selenocysteinyl-tRNA(Sec). The polypeptide is Serine--tRNA ligase (Bifidobacterium longum subsp. infantis (strain ATCC 15697 / DSM 20088 / JCM 1222 / NCTC 11817 / S12)).